The sequence spans 200 residues: Adenylate kinase (200 aa).

Residue 10 to 15 participates in ATP binding; sequence GAGKGT. The segment at 30 to 59 is NMP; it reads STGDMLRAAVAAETPVGLEAKAIMESGGLV. AMP is bound by residues Thr-31, Arg-36, 57–59, 85–88, and Gln-92; these read GLV and GFPR. The LID stretch occupies residues 126 to 142; sequence KRAEETAARGQPVRKDD. Arg-127 provides a ligand contact to ATP. Positions 139 and 150 each coordinate AMP. An ATP-binding site is contributed by Lys-178.

This sequence belongs to the adenylate kinase family. As to quaternary structure, monomer.

Its subcellular location is the cytoplasm. The catalysed reaction is AMP + ATP = 2 ADP. It functions in the pathway purine metabolism; AMP biosynthesis via salvage pathway; AMP from ADP: step 1/1. Functionally, catalyzes the reversible transfer of the terminal phosphate group between ATP and AMP. Plays an important role in cellular energy homeostasis and in adenine nucleotide metabolism. This is Adenylate kinase from Methylorubrum extorquens (strain CM4 / NCIMB 13688) (Methylobacterium extorquens).